Consider the following 274-residue polypeptide: Large ribosomal subunit protein uL2 (274 aa).

Residues 224 to 274 (VAMNPVDHPHGGGEGRTSGGRHPVTPWGIPTKGYKTRRNKRSNKLIVQKRK) are disordered. Positions 257 to 274 (YKTRRNKRSNKLIVQKRK) are enriched in basic residues.

It belongs to the universal ribosomal protein uL2 family. Part of the 50S ribosomal subunit. Forms a bridge to the 30S subunit in the 70S ribosome.

One of the primary rRNA binding proteins. Required for association of the 30S and 50S subunits to form the 70S ribosome, for tRNA binding and peptide bond formation. It has been suggested to have peptidyltransferase activity; this is somewhat controversial. Makes several contacts with the 16S rRNA in the 70S ribosome. In Francisella tularensis subsp. mediasiatica (strain FSC147), this protein is Large ribosomal subunit protein uL2.